Here is a 329-residue protein sequence, read N- to C-terminus: Acetyl-coenzyme A carboxylase carboxyl transferase subunit alpha (329 aa).

One can recognise a CoA carboxyltransferase C-terminal domain in the interval 40–294; the sequence is QLETLAARRR…REAIERHLDD (255 aa).

This sequence belongs to the AccA family. As to quaternary structure, acetyl-CoA carboxylase is a heterohexamer composed of biotin carboxyl carrier protein (AccB), biotin carboxylase (AccC) and two subunits each of ACCase subunit alpha (AccA) and ACCase subunit beta (AccD).

Its subcellular location is the cytoplasm. The enzyme catalyses N(6)-carboxybiotinyl-L-lysyl-[protein] + acetyl-CoA = N(6)-biotinyl-L-lysyl-[protein] + malonyl-CoA. The protein operates within lipid metabolism; malonyl-CoA biosynthesis; malonyl-CoA from acetyl-CoA: step 1/1. In terms of biological role, component of the acetyl coenzyme A carboxylase (ACC) complex. First, biotin carboxylase catalyzes the carboxylation of biotin on its carrier protein (BCCP) and then the CO(2) group is transferred by the carboxyltransferase to acetyl-CoA to form malonyl-CoA. The chain is Acetyl-coenzyme A carboxylase carboxyl transferase subunit alpha from Prochlorococcus marinus (strain MIT 9303).